A 398-amino-acid polypeptide reads, in one-letter code: 1-deoxy-D-xylulose 5-phosphate reductoisomerase (398 aa).

6 residues coordinate NADPH: Thr10, Gly11, Ser12, Ile13, Asn38, and Asn124. Lys125 contributes to the 1-deoxy-D-xylulose 5-phosphate binding site. An NADPH-binding site is contributed by Glu126. Mn(2+) is bound at residue Asp150. The 1-deoxy-D-xylulose 5-phosphate site is built by Ser151, Glu152, Ser176, and His199. Glu152 serves as a coordination point for Mn(2+). An NADPH-binding site is contributed by Gly205. 4 residues coordinate 1-deoxy-D-xylulose 5-phosphate: Ser212, Asn217, Lys218, and Glu221. Glu221 provides a ligand contact to Mn(2+).

The protein belongs to the DXR family. The cofactor is Mg(2+). Requires Mn(2+) as cofactor.

The catalysed reaction is 2-C-methyl-D-erythritol 4-phosphate + NADP(+) = 1-deoxy-D-xylulose 5-phosphate + NADPH + H(+). The protein operates within isoprenoid biosynthesis; isopentenyl diphosphate biosynthesis via DXP pathway; isopentenyl diphosphate from 1-deoxy-D-xylulose 5-phosphate: step 1/6. Catalyzes the NADPH-dependent rearrangement and reduction of 1-deoxy-D-xylulose-5-phosphate (DXP) to 2-C-methyl-D-erythritol 4-phosphate (MEP). The polypeptide is 1-deoxy-D-xylulose 5-phosphate reductoisomerase (Crocosphaera subtropica (strain ATCC 51142 / BH68) (Cyanothece sp. (strain ATCC 51142))).